We begin with the raw amino-acid sequence, 66 residues long: Large ribosomal subunit protein bL35 (66 aa).

Over residues 1-16 (MPKQKTHRASAKRFKR) the composition is skewed to basic residues. A disordered region spans residues 1–21 (MPKQKTHRASAKRFKRTGSGG).

Belongs to the bacterial ribosomal protein bL35 family.

This chain is Large ribosomal subunit protein bL35, found in Streptococcus agalactiae serotype Ia (strain ATCC 27591 / A909 / CDC SS700).